Reading from the N-terminus, the 487-residue chain is N-succinylglutamate 5-semialdehyde dehydrogenase (487 aa).

221–226 (GSSRTG) provides a ligand contact to NAD(+). Catalysis depends on residues glutamate 244 and cysteine 278.

It belongs to the aldehyde dehydrogenase family. AstD subfamily.

It catalyses the reaction N-succinyl-L-glutamate 5-semialdehyde + NAD(+) + H2O = N-succinyl-L-glutamate + NADH + 2 H(+). It functions in the pathway amino-acid degradation; L-arginine degradation via AST pathway; L-glutamate and succinate from L-arginine: step 4/5. Functionally, catalyzes the NAD-dependent reduction of succinylglutamate semialdehyde into succinylglutamate. The chain is N-succinylglutamate 5-semialdehyde dehydrogenase from Pseudomonas putida (strain GB-1).